The chain runs to 215 residues: Peptide methionine sulfoxide reductase MsrA (215 aa).

Residue Cys57 is part of the active site.

Belongs to the MsrA Met sulfoxide reductase family.

The catalysed reaction is L-methionyl-[protein] + [thioredoxin]-disulfide + H2O = L-methionyl-(S)-S-oxide-[protein] + [thioredoxin]-dithiol. It carries out the reaction [thioredoxin]-disulfide + L-methionine + H2O = L-methionine (S)-S-oxide + [thioredoxin]-dithiol. Its function is as follows. Has an important function as a repair enzyme for proteins that have been inactivated by oxidation. Catalyzes the reversible oxidation-reduction of methionine sulfoxide in proteins to methionine. The sequence is that of Peptide methionine sulfoxide reductase MsrA from Saccharophagus degradans (strain 2-40 / ATCC 43961 / DSM 17024).